Here is a 219-residue protein sequence, read N- to C-terminus: Germin-like protein subfamily 2 member 1 (219 aa).

The signal sequence occupies residues 1 to 21 (MASPTLTLLLLLTTVSFFISS). Cysteine 32 and cysteine 47 are oxidised to a cystine. The Cupin type-1 domain maps to 61–209 (QGLAKPGLTN…AFQTSPGTVK (149 aa)). N-linked (GlcNAc...) asparagine glycosylation occurs at asparagine 70. Residues histidine 109, histidine 111, glutamate 116, and histidine 155 each contribute to the Mn(2+) site.

It belongs to the germin family. As to quaternary structure, oligomer (believed to be a pentamer but probably hexamer).

It localises to the secreted. It is found in the extracellular space. Its subcellular location is the apoplast. Its function is as follows. May play a role in plant defense. Probably has no oxalate oxidase activity even if the active site is conserved. The sequence is that of Germin-like protein subfamily 2 member 1 (GLP4) from Arabidopsis thaliana (Mouse-ear cress).